Reading from the N-terminus, the 778-residue chain is Ubiquitin thioesterase trabid (778 aa).

2 RanBP2-type zinc fingers span residues 5-36 (KDDA…SKPL) and 89-118 (DSEK…KRGG). Residues 187-197 (ASHNQSQSQHR) show a composition bias toward polar residues. Residues 187-226 (ASHNQSQSQHRQPVLQQQMQLQLQPQQQRESSSSAAVPPQ) are disordered. Over residues 198–226 (QPVLQQQMQLQLQPQQQRESSSSAAVPPQ) the composition is skewed to low complexity. The RanBP2-type 3 zinc finger occupies 232-261 (YVSKWACNSCTYENWPRSIKCSMCGKTRER). Residues 265-290 (GSQNDLHASSSLNSQEENQQQLQQPN) form a disordered region. Positions 273–288 (SSSLNSQEENQQQLQQ) are enriched in low complexity. The 159-residue stretch at 507–665 (MFVLWNRSAG…RGHFSALVPM (159 aa)) folds into the OTU domain. The active-site Nucleophile is the Cys518. His658 (proton acceptor) is an active-site residue. Phosphoserine occurs at positions 770, 771, and 775.

It belongs to the peptidase C64 family. Interacts with Apc.

It catalyses the reaction Thiol-dependent hydrolysis of ester, thioester, amide, peptide and isopeptide bonds formed by the C-terminal Gly of ubiquitin (a 76-residue protein attached to proteins as an intracellular targeting signal).. Positive regulator of the Wnt signaling pathway. Specifically cleaves 'Lys-63'-linked ubiquitin chains. May act by deubiquitinating APC protein, a negative regulator of Wnt-mediated transcription. Required for an efficient wg response, but not for other signaling responses, in the eye. The sequence is that of Ubiquitin thioesterase trabid (trbd) from Drosophila melanogaster (Fruit fly).